We begin with the raw amino-acid sequence, 359 residues long: MVAAQAKLVYHLNKYYNEKCQARKAAIAKTIREVCKVVSDVLKEVEVQEPRFISSLNEMDNRYEGLEVISPTEFEVVLYLNQMGVFNFVDDGSLPGCAVLKLSDGRKRSMSLWVEFITASGYLSARKIRSRFQTLVAQAVDKCSYRDVVKMVADTSEVKLRIRDRYVVQITPAFKCTGIWPRSAAHWPLPHIPWPGPNRVAEVKAEGFNLLSKECHTLAGKQSSAESDAWVLQFAEAENRLQLGGCRKKCLSLLKTLRDRHLELPGQPLNNYHMKTLVSYECEKHPRESDWDESCLGDRLNGILLQLISCLQCRRCPHYFLPNLDLFQGKPHSALENAAKQTWRLAREILTNPKSLEKL.

A ribonucleoside 5'-triphosphate-binding positions include 23-24 (RK) and 63-66 (YEGL). Residues glutamate 73 and glutamate 75 each coordinate Mg(2+). A ribonucleoside 5'-triphosphate-binding positions include lysine 248 and 252–255 (SLLK).

Belongs to the mab-21 family. In terms of assembly, monomer. Homodecamer; composed of 2 back to back homopentamers. The protein may exist as monomer in solution and oiligomerizes upon ligand binding.

It is found in the nucleus. Putative nucleotidyltransferase required for several aspects of embryonic development including normal development of the eye. It is unclear whether it displays nucleotidyltransferase activity in vivo. Binds single-stranded RNA (ssRNA). In Xenopus tropicalis (Western clawed frog), this protein is Putative nucleotidyltransferase MAB21L1 (mab21l1).